Consider the following 608-residue polypeptide: DNA mismatch repair protein MutL (608 aa).

Belongs to the DNA mismatch repair MutL/HexB family.

In terms of biological role, this protein is involved in the repair of mismatches in DNA. It is required for dam-dependent methyl-directed DNA mismatch repair. May act as a 'molecular matchmaker', a protein that promotes the formation of a stable complex between two or more DNA-binding proteins in an ATP-dependent manner without itself being part of a final effector complex. In Elusimicrobium minutum (strain Pei191), this protein is DNA mismatch repair protein MutL.